We begin with the raw amino-acid sequence, 122 residues long: Large ribosomal subunit protein uL14 (122 aa).

It belongs to the universal ribosomal protein uL14 family. As to quaternary structure, part of the 50S ribosomal subunit. Forms a cluster with proteins L3 and L19. In the 70S ribosome, L14 and L19 interact and together make contacts with the 16S rRNA in bridges B5 and B8.

In terms of biological role, binds to 23S rRNA. Forms part of two intersubunit bridges in the 70S ribosome. The sequence is that of Large ribosomal subunit protein uL14 from Lacticaseibacillus casei (strain BL23) (Lactobacillus casei).